The primary structure comprises 237 residues: Bax inhibitor 1 (237 aa).

Residues 1–29 (MNIFDRKINFDALLKFSHITPSTQQHLKK) lie on the Cytoplasmic side of the membrane. K7 is covalently cross-linked (Glycyl lysine isopeptide (Lys-Gly) (interchain with G-Cter in ubiquitin)). Residues 30–50 (VYASFALCMFVAAAGAYVHVV) traverse the membrane as a helical segment. The Lumenal segment spans residues 51–52 (TR). The chain crosses the membrane as a helical span at residues 53–73 (FIQAGLLSALGSLGLMIWLMA). The Cytoplasmic segment spans residues 74-86 (TPHSHETEQKRLG). Residues 87 to 107 (LLAGFAFLTGVGLGPALDLCI) form a helical membrane-spanning segment. Over 108–112 (AINPS) the chain is Lumenal. The helical transmembrane segment at 113–133 (ILPTAFMGTAMIFTCFTLSAL) threads the bilayer. Over 134–139 (YARRRS) the chain is Cytoplasmic. A helical membrane pass occupies residues 140 to 160 (YLFLGGILMSAMSLMVLSSLG). The Lumenal segment spans residues 161-166 (NLFFGS). The chain crosses the membrane as a helical span at residues 167–187 (IWLFQANLYVGLVVMCGFVLF). Residues 188–206 (DTQLIIEKAENGDKDYIWH) lie on the Cytoplasmic side of the membrane. Residues 207-227 (CVDLFSDFVTLFRKLMMILAM) constitute an intramembrane region (helical). Residues 228 to 237 (NEKDKKKEKK) lie on the Cytoplasmic side of the membrane.

This sequence belongs to the BI1 family. As to quaternary structure, interacts with BCL2 and BCL2L1. Interacts with ERN1. Ubiquitinated by BFAR, leading to proteasomal degradation.

Its subcellular location is the endoplasmic reticulum membrane. Functionally, endoplasmic reticulum (ER)-resident protein that confers cellular protection as an anti-apoptotic protein by limiting multiple stress-inducing pathways surrounding the endoplasmic reticulum and mitochondria. Inhibits the activities of the key sensor for the endoplasmic reticulum unfolded protein response IRE1alpha/ERN1 both directly and by blocking BAX/BAK binding. Modulates ER calcium homeostasis by acting as a calcium-leak channel. Negatively regulates autophagy and autophagosome formation, especially during periods of nutrient deprivation, and reduces cell survival during starvation. The sequence is that of Bax inhibitor 1 (TMBIM6) from Sus scrofa (Pig).